A 313-amino-acid chain; its full sequence is Pantothenate synthetase (313 aa).

43 to 50 is a binding site for ATP; sequence MGALHEGH. His50 functions as the Proton donor in the catalytic mechanism. Gln75 is a binding site for (R)-pantoate. Gln75 is a binding site for beta-alanine. 161–164 serves as a coordination point for ATP; the sequence is GEKD. A (R)-pantoate-binding site is contributed by Gln167. Residues Val190 and 198 to 201 contribute to the ATP site; that span reads LSSR.

It belongs to the pantothenate synthetase family. As to quaternary structure, homodimer.

Its subcellular location is the cytoplasm. It carries out the reaction (R)-pantoate + beta-alanine + ATP = (R)-pantothenate + AMP + diphosphate + H(+). The protein operates within cofactor biosynthesis; (R)-pantothenate biosynthesis; (R)-pantothenate from (R)-pantoate and beta-alanine: step 1/1. In terms of biological role, catalyzes the condensation of pantoate with beta-alanine in an ATP-dependent reaction via a pantoyl-adenylate intermediate. The sequence is that of Pantothenate synthetase from Mycobacterium sp. (strain JLS).